The primary structure comprises 162 residues: Putative ethylene-responsive transcription factor ERF121 (162 aa).

3 disordered regions span residues 1-21 (MDYSENVQNKNFTPISQPPNL), 84-103 (IKQEKKHKGVRKKPSGKWSA), and 139-162 (KRSARRGSKKGEGSIHQEVGGGDD). Positions 87–98 (EKKHKGVRKKPS) are enriched in basic residues. The AP2/ERF DNA-binding region spans 89 to 146 (KHKGVRKKPSGKWSAEIWDPSTRTRRWLGTFPTAEMAADAYDEAAAALVEKRSARRGS).

It belongs to the AP2/ERF transcription factor family. ERF subfamily.

It localises to the nucleus. Its function is as follows. Probably acts as a transcriptional activator. Binds to the GCC-box pathogenesis-related promoter element. May be involved in the regulation of gene expression by stress factors and by components of stress signal transduction pathways. This is Putative ethylene-responsive transcription factor ERF121 (ERF121) from Arabidopsis thaliana (Mouse-ear cress).